Here is a 383-residue protein sequence, read N- to C-terminus: Forkhead box protein I3-B (383 aa).

Residues 1–12 (MTSYESQGQSPT) show a composition bias toward polar residues. Disordered stretches follow at residues 1-55 (MTSY…YELG), 215-277 (DNGN…PCLS), and 317-348 (TTGFSTFTPSTTVSDWASPLPPPPPMSSSPSH). The span at 25 to 35 (PPELSLYSDSY) shows a compositional bias: low complexity. Positions 130–224 (RPPYSYSALI…DNGNFRRKRK (95 aa)) form a DNA-binding region, fork-head. The short motif at 220–226 (RRKRKRK) is the Nuclear localization signal element. Residues 234–249 (SSSGGNESGDSNGRGS) show a composition bias toward low complexity. Residues 250 to 277 (PKSQSIDISTSPEKGPSPASTGPSPCLS) show a composition bias toward polar residues. Residues 317-330 (TTGFSTFTPSTTVS) are compositionally biased toward low complexity.

As to expression, expressed in ionocyte precursors.

It localises to the nucleus. Transcription factor required for epithelial cell differentiation. Involved in specification of skin ionocytes from epidermal precursors. In Danio rerio (Zebrafish), this protein is Forkhead box protein I3-B.